The following is a 644-amino-acid chain: Archaeal Lon protease (644 aa).

Residues 1–18 (MKTTIKNSRTQESVSYEG) show a composition bias toward polar residues. A disordered region spans residues 1–30 (MKTTIKNSRTQESVSYEGNETKKGTGETLS). Topologically, residues 1–137 (MKTTIKNSRT…KARSQDEKKN (137 aa)) are cytoplasmic. 71-78 (GEPGVGKS) contacts ATP. 2 consecutive transmembrane segments (helical) span residues 138–155 (LFMM…FMMN) and 156–171 (QFLA…FLAL). Residues 172–644 (QQFRPRTTVM…PSIMKKPAMH (473 aa)) lie on the Cytoplasmic side of the membrane. Residues 438-617 (GGEVGRVNGL…GDVLEHALIG (180 aa)) form the Lon proteolytic domain. Catalysis depends on residues S524 and K567.

Belongs to the peptidase S16 family. Archaeal LonB subfamily. As to quaternary structure, homohexamer. Organized in a ring with a central cavity.

It is found in the cell membrane. Functionally, ATP-dependent serine protease that mediates the selective degradation of mutant and abnormal proteins as well as certain short-lived regulatory proteins. Degrades polypeptides processively. This is Archaeal Lon protease from Methanothermobacter thermautotrophicus (strain ATCC 29096 / DSM 1053 / JCM 10044 / NBRC 100330 / Delta H) (Methanobacterium thermoautotrophicum).